The primary structure comprises 902 residues: 3'-5' exonuclease DinG (902 aa).

One can recognise an Exonuclease domain in the interval 8–161; sequence VVDLETTGNQ…DEDATTTAKL (154 aa). The 256-residue stretch at 241 to 496 folds into the Helicase ATP-binding domain; sequence KNVTQSLNLT…KAVDKLEQQR (256 aa). Residue 276–283 coordinates ATP; that stretch reads APLGSGKS. Residues 448-451 carry the DEAH box motif; sequence DEAH. The Helicase C-terminal domain maps to 714 to 883; the sequence is YIVEYITVTQ…HFKQRKGNIK (170 aa).

The protein belongs to the helicase family. DinG subfamily. Type 2 sub-subfamily.

3'-5' exonuclease. This chain is 3'-5' exonuclease DinG, found in Staphylococcus epidermidis (strain ATCC 35984 / DSM 28319 / BCRC 17069 / CCUG 31568 / BM 3577 / RP62A).